Consider the following 148-residue polypeptide: UPF0735 ACT domain-containing protein Dred_1164 (148 aa).

Positions 72 to 147 (TLALLMEHQP…GVREVRLVGQ (76 aa)) constitute an ACT domain.

This sequence belongs to the UPF0735 family.

This Desulforamulus reducens (strain ATCC BAA-1160 / DSM 100696 / MI-1) (Desulfotomaculum reducens) protein is UPF0735 ACT domain-containing protein Dred_1164.